The chain runs to 388 residues: Dauer abnormal formation protein 25 (388 aa).

3 ANK repeats span residues 40–69, 74–103, and 107–137; these read SGMS…DVND, TLYT…RMYL, and IGKT…DVIE. Zn(2+) contacts are provided by Cys321, Cys324, Cys333, Cys336, Cys341, Cys345, His353, and Cys357. Residues 321–357 form an MYND-type zinc finger; it reads CSVCGHPGAKKRCTQCKLAYCSQECQKFDWPIHKKVC.

As to expression, expressed in many ciliated sensory neurons.

The protein localises to the cell projection. The protein resides in the cilium. May be involved in the trafficking and dendritic transport of signaling proteins, such as the receptor-type guanylate cyclases gcy-12 and daf-11, to the cilia. In ciliated sensory neurons, required for the calcium flux to the cytoplasm in response to onset and removal of a nitric oxide (NO) stimulus and is thereby required for the behavioral avoidance response to NO-producing organisms like P.aeruginosa. This Caenorhabditis elegans protein is Dauer abnormal formation protein 25 (daf-25).